The sequence spans 385 residues: NADH-quinone oxidoreductase subunit D 2 (385 aa).

The protein belongs to the complex I 49 kDa subunit family. In terms of assembly, NDH-1 is composed of 14 different subunits. Subunits NuoB, C, D, E, F, and G constitute the peripheral sector of the complex.

The protein localises to the cell membrane. The catalysed reaction is a quinone + NADH + 5 H(+)(in) = a quinol + NAD(+) + 4 H(+)(out). Its function is as follows. NDH-1 shuttles electrons from NADH, via FMN and iron-sulfur (Fe-S) centers, to quinones in the respiratory chain. The immediate electron acceptor for the enzyme in this species is believed to be a menaquinone. Couples the redox reaction to proton translocation (for every two electrons transferred, four hydrogen ions are translocated across the cytoplasmic membrane), and thus conserves the redox energy in a proton gradient. The protein is NADH-quinone oxidoreductase subunit D 2 of Salinispora arenicola (strain CNS-205).